Reading from the N-terminus, the 449-residue chain is Tryptophan--tRNA ligase (449 aa).

ATP contacts are provided by residues T10–T12 and G18–N19. A 'HIGH' region motif is present at residues T11–N19. D143 provides a ligand contact to L-tryptophan. ATP is bound by residues G155–D157, L197, and K204–S208. The short motif at K204–S208 is the 'KMSKS' region element.

The protein belongs to the class-I aminoacyl-tRNA synthetase family. Homodimer.

The protein localises to the cytoplasm. It carries out the reaction tRNA(Trp) + L-tryptophan + ATP = L-tryptophyl-tRNA(Trp) + AMP + diphosphate + H(+). Functionally, catalyzes the attachment of tryptophan to tRNA(Trp). The chain is Tryptophan--tRNA ligase from Pseudomonas syringae pv. tomato (strain ATCC BAA-871 / DC3000).